The sequence spans 477 residues: Proton-coupled amino acid transporter 3 (477 aa).

Positions methionine 1–cysteine 13 are enriched in basic and acidic residues. The disordered stretch occupies residues methionine 1–lysine 42. Topologically, residues methionine 1 to glutamine 54 are cytoplasmic. A compositionally biased stretch (low complexity) spans glycine 19 to serine 38. Residues isoleucine 55–valine 75 form a helical membrane-spanning segment. The Extracellular segment spans residues lysine 76–asparagine 77. The chain crosses the membrane as a helical span at residues alanine 78–methionine 98. Residues aspartate 99 to tyrosine 144 lie on the Cytoplasmic side of the membrane. The helical transmembrane segment at valine 145–methionine 165 threads the bilayer. The Extracellular portion of the chain corresponds to alanine 166 to leucine 202. A helical membrane pass occupies residues threonine 203–phenylalanine 223. Residues serine 224–threonine 225 lie on the Cytoplasmic side of the membrane. Residues leucine 226–proline 246 form a helical membrane-spanning segment. Topologically, residues histidine 247–threonine 259 are extracellular. A helical transmembrane segment spans residues phenylalanine 260 to leucine 280. Topologically, residues lysine 281 to proline 291 are cytoplasmic. A helical transmembrane segment spans residues alanine 292–glycine 312. At tyrosine 313–glycine 344 the chain is on the extracellular side. A helical membrane pass occupies residues isoleucine 345–valine 365. Topologically, residues serine 366 to leucine 374 are cytoplasmic. A helical transmembrane segment spans residues phenylalanine 375 to isoleucine 395. Over proline 396 to aspartate 399 the chain is Extracellular. Residues leucine 400 to leucine 420 traverse the membrane as a helical segment. At leucine 421–aspartate 439 the chain is on the cytoplasmic side. The helical transmembrane segment at isoleucine 440 to glutamate 460 threads the bilayer. Topologically, residues methionine 461–threonine 477 are extracellular.

This sequence belongs to the amino acid/polyamine transporter 2 family.

The protein resides in the membrane. This chain is Proton-coupled amino acid transporter 3 (Slc36a3), found in Rattus norvegicus (Rat).